Here is a 644-residue protein sequence, read N- to C-terminus: Exoribonuclease 2 (644 aa).

Residues 189 to 516 (REDLTALDFV…NHRLLKAVIK (328 aa)) form the RNB domain. An S1 motif domain is found at 561–643 (DTRFAAEIVD…ETRSIIARPV (83 aa)).

The protein belongs to the RNR ribonuclease family. RNase II subfamily.

The protein resides in the cytoplasm. The enzyme catalyses Exonucleolytic cleavage in the 3'- to 5'-direction to yield nucleoside 5'-phosphates.. Functionally, involved in mRNA degradation. Hydrolyzes single-stranded polyribonucleotides processively in the 3' to 5' direction. This is Exoribonuclease 2 from Escherichia coli O139:H28 (strain E24377A / ETEC).